A 176-amino-acid polypeptide reads, in one-letter code: Ribosome maturation factor RimM (176 aa).

The PRC barrel domain occupies 95–169 (EDEVYLFELE…TARIAPPPGL (75 aa)).

Belongs to the RimM family. Binds ribosomal protein uS19.

It localises to the cytoplasm. An accessory protein needed during the final step in the assembly of 30S ribosomal subunit, possibly for assembly of the head region. Essential for efficient processing of 16S rRNA. May be needed both before and after RbfA during the maturation of 16S rRNA. It has affinity for free ribosomal 30S subunits but not for 70S ribosomes. This is Ribosome maturation factor RimM from Nitratidesulfovibrio vulgaris (strain ATCC 29579 / DSM 644 / CCUG 34227 / NCIMB 8303 / VKM B-1760 / Hildenborough) (Desulfovibrio vulgaris).